The primary structure comprises 822 residues: ATP-dependent zinc metalloprotease FTSH 8, mitochondrial (822 aa).

Positions 1 to 25 (MSLASLARALSRRSAPSSSRARQGF) are enriched in low complexity. Disordered regions lie at residues 1-50 (MSLA…LHGG), 103-131 (NYYP…STDD), and 202-221 (SSPQ…TTND). A mitochondrion-targeting transit peptide spans 1-93 (MSLASLARAL…LANPQFRRLF (93 aa)). A compositionally biased stretch (basic and acidic residues) spans 108–127 (GKKEAPKGDGSNKSDSKQDS). 375 to 382 (GPPGTGKT) contributes to the ATP binding site. Residue His-600 coordinates Zn(2+). Residue Glu-601 is part of the active site. Zn(2+) contacts are provided by His-604 and Asp-676. The disordered stretch occupies residues 781–822 (PTNYDLFKQGFQDEEDSKNQEAAKTPQPDDDGTPSLGEVVPT).

In the N-terminal section; belongs to the AAA ATPase family. It in the C-terminal section; belongs to the peptidase M41 family. Zn(2+) serves as cofactor.

It localises to the mitochondrion. Functionally, probable ATP-dependent zinc metallopeptidase. The chain is ATP-dependent zinc metalloprotease FTSH 8, mitochondrial (FTSH8) from Oryza sativa subsp. japonica (Rice).